A 353-amino-acid chain; its full sequence is Dihydroorotate dehydrogenase (quinone) (353 aa).

FMN contacts are provided by residues 67-71 and threonine 91; that span reads AGFDK. Lysine 71 lines the substrate pocket. A substrate-binding site is contributed by 116–120; sequence NRMGF. 2 residues coordinate FMN: asparagine 144 and asparagine 177. Position 177 (asparagine 177) interacts with substrate. The active-site Nucleophile is serine 180. Asparagine 182 contributes to the substrate binding site. Residues lysine 213 and threonine 241 each contribute to the FMN site. 242–243 serves as a coordination point for substrate; it reads NT. Residues glycine 265, glycine 294, and 315–316 contribute to the FMN site; that span reads YT.

It belongs to the dihydroorotate dehydrogenase family. Type 2 subfamily. In terms of assembly, monomer. FMN is required as a cofactor.

The protein localises to the cell membrane. It catalyses the reaction (S)-dihydroorotate + a quinone = orotate + a quinol. It participates in pyrimidine metabolism; UMP biosynthesis via de novo pathway; orotate from (S)-dihydroorotate (quinone route): step 1/1. Catalyzes the conversion of dihydroorotate to orotate with quinone as electron acceptor. The chain is Dihydroorotate dehydrogenase (quinone) from Mycobacteroides abscessus (strain ATCC 19977 / DSM 44196 / CCUG 20993 / CIP 104536 / JCM 13569 / NCTC 13031 / TMC 1543 / L948) (Mycobacterium abscessus).